Here is a 125-residue protein sequence, read N- to C-terminus: Large ribosomal subunit protein bL12 (125 aa).

The protein belongs to the bacterial ribosomal protein bL12 family. In terms of assembly, homodimer. Part of the ribosomal stalk of the 50S ribosomal subunit. Forms a multimeric L10(L12)X complex, where L10 forms an elongated spine to which 2 to 4 L12 dimers bind in a sequential fashion. Binds GTP-bound translation factors.

Forms part of the ribosomal stalk which helps the ribosome interact with GTP-bound translation factors. Is thus essential for accurate translation. The protein is Large ribosomal subunit protein bL12 of Mannheimia succiniciproducens (strain KCTC 0769BP / MBEL55E).